We begin with the raw amino-acid sequence, 178 residues long: uncharacterized protein (178 aa).

Positions 1–16 (MNKRTSVDASKEDLHP) are enriched in basic and acidic residues. Positions 1-43 (MNKRTSVDASKEDLHPADPQSGEGVPPNRKNTKTSPRGEGTAP) are disordered.

This is an uncharacterized protein from Homo sapiens (Human).